The chain runs to 416 residues: Lipoyl synthase, mitochondrial (416 aa).

Residues 1 to 33 (MAAPTRSLRRLSSFRTTISPSLTVTAPIGCRSY) constitute a mitochondrion transit peptide. Positions 132, 137, 143, 163, 167, 170, and 378 each coordinate [4Fe-4S] cluster. The Radical SAM core domain occupies 148–367 (DKSSATATIM…RQRALDMGFL (220 aa)). Residues 396–416 (GSGTAERTVDQTAATTDEATR) are disordered. Positions 405–416 (DQTAATTDEATR) are enriched in polar residues.

Belongs to the radical SAM superfamily. Lipoyl synthase family. The cofactor is [4Fe-4S] cluster.

Its subcellular location is the mitochondrion. The catalysed reaction is [[Fe-S] cluster scaffold protein carrying a second [4Fe-4S](2+) cluster] + N(6)-octanoyl-L-lysyl-[protein] + 2 oxidized [2Fe-2S]-[ferredoxin] + 2 S-adenosyl-L-methionine + 4 H(+) = [[Fe-S] cluster scaffold protein] + N(6)-[(R)-dihydrolipoyl]-L-lysyl-[protein] + 4 Fe(3+) + 2 hydrogen sulfide + 2 5'-deoxyadenosine + 2 L-methionine + 2 reduced [2Fe-2S]-[ferredoxin]. The protein operates within protein modification; protein lipoylation via endogenous pathway; protein N(6)-(lipoyl)lysine from octanoyl-[acyl-carrier-protein]: step 2/2. Its function is as follows. Catalyzes the radical-mediated insertion of two sulfur atoms into the C-6 and C-8 positions of the octanoyl moiety bound to the lipoyl domains of lipoate-dependent enzymes, thereby converting the octanoylated domains into lipoylated derivatives. This Penicillium rubens (strain ATCC 28089 / DSM 1075 / NRRL 1951 / Wisconsin 54-1255) (Penicillium chrysogenum) protein is Lipoyl synthase, mitochondrial.